Reading from the N-terminus, the 145-residue chain is Cell wall teichoic acid glycosylation protein GtcA (145 aa).

4 consecutive transmembrane segments (helical) span residues 21–41 (ILMYLIMGGFTTLINIVTFWL), 52–69 (IANTIAWVASVLFAYFSN), 96–116 (FLTYLVDILVMILLIEVLSIN), and 121–141 (KIWTNVIVLVLNYVFSKWIIF).

It belongs to the GtrA family.

It localises to the cell membrane. Functionally, involved in the decoration of cell wall teichoic acid with galactose and glucose. This Listeria monocytogenes serovar 1/2a (strain ATCC BAA-679 / EGD-e) protein is Cell wall teichoic acid glycosylation protein GtcA (gtcA).